The chain runs to 112 residues: UPF0060 membrane protein Daro_2632 (112 aa).

The next 4 membrane-spanning stretches (helical) occupy residues Val-7 to Leu-27, Pro-34 to Leu-54, Ala-59 to Trp-79, and Trp-89 to Ala-109.

It belongs to the UPF0060 family.

It is found in the cell inner membrane. In Dechloromonas aromatica (strain RCB), this protein is UPF0060 membrane protein Daro_2632.